The primary structure comprises 397 residues: Dimethyladenosine transferase 2, mitochondrial (397 aa).

A mitochondrion-targeting transit peptide spans 1–44; that stretch reads MRGLAMRLPPRLALSVLAGRGPSCILGSGAATRKDWQERNRRSF. Residues isoleucine 75, glutamate 124, and aspartate 150 each contribute to the S-adenosyl-L-methionine site. The DNA-binding stretch occupies residues 329–330; sequence KR.

This sequence belongs to the class I-like SAM-binding methyltransferase superfamily. rRNA adenine N(6)-methyltransferase family. KsgA subfamily. As to quaternary structure, homodimer. Component of the mitochondrial transcription initiation complex, composed at least of TFB2M, TFAM and POLRMT. In this complex TFAM recruits POLRMT to the promoter whereas TFB2M induces structural changes in POLRMT to enable promoter opening and trapping of the DNA non-template strand. Interacts with mitochondrial RNA polymerase POLRMT. Interacts with TFAM.

The protein localises to the mitochondrion. It catalyses the reaction adenosine in rRNA + S-adenosyl-L-methionine = N(6)-methyladenosine in rRNA + S-adenosyl-L-homocysteine + H(+). Functionally, S-adenosyl-L-methionine-dependent rRNA methyltransferase which may methylate two specific adjacent adenosines in the loop of a conserved hairpin near the 3'-end of 12S mitochondrial rRNA. Component of the mitochondrial transcription initiation complex, composed at least of TFB2M, TFAM and POLRMT that is required for basal transcription of mitochondrial DNA. In this complex TFAM recruits POLRMT to a specific promoter whereas TFB2M induces structural changes in POLRMT to enable promoter opening and trapping of the DNA non-template strand. Stimulates transcription independently of the methyltransferase activity. This is Dimethyladenosine transferase 2, mitochondrial from Rattus norvegicus (Rat).